A 315-amino-acid chain; its full sequence is Homoserine kinase (315 aa).

91–101 (PIGSGLGSSAS) contacts ATP.

It belongs to the GHMP kinase family. Homoserine kinase subfamily.

The protein resides in the cytoplasm. The catalysed reaction is L-homoserine + ATP = O-phospho-L-homoserine + ADP + H(+). The protein operates within amino-acid biosynthesis; L-threonine biosynthesis; L-threonine from L-aspartate: step 4/5. In terms of biological role, catalyzes the ATP-dependent phosphorylation of L-homoserine to L-homoserine phosphate. The chain is Homoserine kinase from Buchnera aphidicola subsp. Cinara cedri (strain Cc).